Consider the following 1521-residue polypeptide: MNWNTKQENVPKPPPYSKTQSSILQHFLMTSTTSQSSFNYSPHNQEASQTSFNYSLHNQEACMYSGNSNSVSQPLLSGRNYITPQTQISVSNMPTRTIVASQSSMERVVSTNGKGPQQPNHNLQTVSSGIMQNVWLPSHTEATISHNPDGGTNMPYMHPPQNQLVTSDTYSMQLQMAPLHSGKVPMTHQGSQGLNHFIPDQLVDWTQYTSNELSYPEYRPPPKQYSYILPATTSLQVKNNQLPTYTQSLQSKHSVPLSSHQYAAEASKRLSALPYSCRYENQHVQNAQPVSKHLPMEVPQSSEVHSSEKKKDTYRGFKQQWQNPNEKVSIGQFSEVKINIKQPYSESVRPSGDGVQALVQNNQEKRKYTYNPNTNQVIDTNATKEKLVRDIKSLVEIKKKFSELARKIKINKSLLMAAGCSKTANTSYTEPIQHSEFSAKEMSAKNGNDCSMELLATCLSLWKNQPSKTTEENVPKPLEEKQCNTSRISTTVVGSANPTNEVHVKSLCSGVGNSQKMMSSSQTVLPVLIPSCESSGVAVGKGTELQIAVVSPLVLSDTNTLPGKDSVPEVLPETLYPVVKEGSVCSLQTQPTETVALPFDVIGAVASNNISAEIPLPVDKEKQHKPIQGDPDIADSSLGKHSPLGTEVLPKPMDSTIVSGPMLQIESICSLAEGDVSYNSQIAEIFNSVQTEPQKPSPNQVIDSQQEQVYDTTENKDFSLQKDKCVQCTDVPHEVPEQPEPLQPEEPASSEYVEANREATEESCREYTGRKESTAKDVCLPAAIQQDPHPRETDMFSKSDHSLPAINEINDESEPISYLHDQLSELLKEFPYGIETFNRHEVSLDQQKTHKIVENQTGGKTSNVSGDSTDQIKITVLNSEQIKELFPEDDQPCDKLAEPENKEIVAEVKSPCDSQIPREESHDLGMLDPEKDKIHCCALGWLSMVYEGVPQCHCSSTEKKEKDQCLDINSSKQGEQPCNSGITIFEINPVSNNSKTPLTQATEEGHFSAVHGEKTKASKTKDNREGQELACHFSAKCYKKDKKGNFKIRHDTSLKMEQKLKNISSKCDIPNPSKCNKIAAPEILHVTTSNSAKNMPFSKQASQESLQKKHTSQDLGPVKAPIELSSNTDPCRSNTSSVQSVSPEKKKLKFKAGGSRLKYFEKRKTDHVIIPDVEIKKKKYEKQEQNKNAGDTLKLCSILTESNERASVQEKTVPSPESSDPKGSSSKSTRVITVQEYLQRQKDKQITGNNASRNICVETVLCDSGHTKTSKHSAAVSWGKLVEGQSISAETAKELEHNSSSHGKDFKIHHSEASRTHSVSNNNKGKFDGKQPDKMFKNKTSMNNESNQMPLQVKEQRKQYLNRVAFKCTERESICLTKLDSASKKLSIEKKSGEYTSKTKDTDKPSMLEFKLCPDVLLKNTSTVDKQDCPGPGPEKEQAPVQVSGIKSTKEDWLKCIPTRTKMPESSQRDSADSRLSKRSLSADEFEILQNPVKESNIMFRTYKKMYLEKRSRSLGSSPVK.

A Glycyl lysine isopeptide (Lys-Gly) (interchain with G-Cter in SUMO2) cross-link involves residue Lys223. Residues 621-640 (EKQHKPIQGDPDIADSSLGK) form a disordered region. Phosphoserine is present on Ser910. Position 996 is a phosphothreonine (Thr996). Polar residues-rich tracts occupy residues 1093–1105 (KNMPFSKQASQES) and 1124–1142 (LSSNTDPCRSNTSSVQSVS). 3 disordered regions span residues 1093–1147 (KNMP…EKKK), 1204–1230 (ERASVQEKTVPSPESSDPKGSSSKSTR), and 1312–1335 (EASRTHSVSNNNKGKFDGKQPDKM). Ser1142 is modified (phosphoserine). Low complexity predominate over residues 1214-1228 (PSPESSDPKGSSSKS). Residues 1325–1335 (GKFDGKQPDKM) are compositionally biased toward basic and acidic residues. Lys1411 participates in a covalent cross-link: Glycyl lysine isopeptide (Lys-Gly) (interchain with G-Cter in SUMO2). 2 disordered regions span residues 1425-1444 (DKQDCPGPGPEKEQAPVQVS) and 1457-1485 (IPTRTKMPESSQRDSADSRLSKRSLSADE). The span at 1467–1476 (SQRDSADSRL) shows a compositional bias: basic and acidic residues. 2 positions are modified to phosphoserine: Ser1482 and Ser1514.

As to quaternary structure, interacts with SETDB1.

The protein resides in the nucleus. Its function is as follows. Plays a role in the regulation of imprinted gene expression, regulates repressive epigenetic modifications associated with SETDB1. Required for the recruitment or accumulation of SETDB1 to the endogenous retroviruses (ERVs) and maintenance of repressive chromatin configuration, contributing to a subset of the SETDB1-dependent ERV silencing in embryonic stem cells. In Mus musculus (Mouse), this protein is Retroelement silencing factor 1.